Here is a 145-residue protein sequence, read N- to C-terminus: Large ribosomal subunit protein uL15 (145 aa).

Residues 1–50 are disordered; that stretch reads MLHTIKPVANARKTTKRLGRGPGSGTGKTSGKGHKGQLARSGKTLRPGFE. The segment covering 20–30 has biased composition (gly residues); sequence RGPGSGTGKTS.

The protein belongs to the universal ribosomal protein uL15 family. Part of the 50S ribosomal subunit.

In terms of biological role, binds to the 23S rRNA. In Phytoplasma australiense, this protein is Large ribosomal subunit protein uL15.